The primary structure comprises 730 residues: Elongation factor 2 (730 aa).

The 242-residue stretch at Glu19–Leu260 folds into the tr-type G domain. Residues Ala28 to Thr35, Asp94 to His98, and Asn148 to Asp151 each bind GTP. His596 is subject to Diphthamide.

The protein belongs to the TRAFAC class translation factor GTPase superfamily. Classic translation factor GTPase family. EF-G/EF-2 subfamily.

It localises to the cytoplasm. In terms of biological role, catalyzes the GTP-dependent ribosomal translocation step during translation elongation. During this step, the ribosome changes from the pre-translocational (PRE) to the post-translocational (POST) state as the newly formed A-site-bound peptidyl-tRNA and P-site-bound deacylated tRNA move to the P and E sites, respectively. Catalyzes the coordinated movement of the two tRNA molecules, the mRNA and conformational changes in the ribosome. The polypeptide is Elongation factor 2 (fusA) (Methanosarcina thermophila).